A 79-amino-acid polypeptide reads, in one-letter code: Putative membrane protein insertion efficiency factor (79 aa).

Belongs to the UPF0161 family.

Its subcellular location is the cell inner membrane. Could be involved in insertion of integral membrane proteins into the membrane. This chain is Putative membrane protein insertion efficiency factor, found in Bacteroides thetaiotaomicron (strain ATCC 29148 / DSM 2079 / JCM 5827 / CCUG 10774 / NCTC 10582 / VPI-5482 / E50).